The following is a 270-amino-acid chain: Putative hydro-lyase Noca_0093 (270 aa).

It belongs to the D-glutamate cyclase family.

This chain is Putative hydro-lyase Noca_0093, found in Nocardioides sp. (strain ATCC BAA-499 / JS614).